The primary structure comprises 292 residues: MQQLIEKASTLMEALPYIRRFSGKTIVIKYGGHAMADEKLRKSFALDVILLKYIGINTVVVHGGGPQINETLKRYGIVSEFVKGMRVTDKETMGVVEMVLTGQVNREVVGYINQNGGRAAGLSGKDGDLLICEKLLQEVKSEDGSTETVDIGFVGDVVEVNPAILQALEKGGFIPVIAPVGVGRAGESYNINADVVAGKVAAALNAEKLILLTDVSGVKSKEGELLSSIPLADVPALIDNGTVTGGMIPKVTCCTDALAAGVKKAHIVDGRIEHAILLEIFTNVGIGTEIQA.

Substrate is bound by residues 64–65 (GG), Arg-86, and Asn-190.

This sequence belongs to the acetylglutamate kinase family. ArgB subfamily.

Its subcellular location is the cytoplasm. The enzyme catalyses N-acetyl-L-glutamate + ATP = N-acetyl-L-glutamyl 5-phosphate + ADP. It participates in amino-acid biosynthesis; L-arginine biosynthesis; N(2)-acetyl-L-ornithine from L-glutamate: step 2/4. Functionally, catalyzes the ATP-dependent phosphorylation of N-acetyl-L-glutamate. The chain is Acetylglutamate kinase from Citrifermentans bemidjiense (strain ATCC BAA-1014 / DSM 16622 / JCM 12645 / Bem) (Geobacter bemidjiensis).